Here is a 426-residue protein sequence, read N- to C-terminus: Serine--tRNA ligase (426 aa).

233–235 contacts L-serine; the sequence is TSE. Position 264–266 (264–266) interacts with ATP; sequence RAE. Glu287 serves as a coordination point for L-serine. 351 to 354 contributes to the ATP binding site; sequence EISS. Ser387 contributes to the L-serine binding site.

Belongs to the class-II aminoacyl-tRNA synthetase family. Type-1 seryl-tRNA synthetase subfamily. As to quaternary structure, homodimer. The tRNA molecule binds across the dimer.

The protein resides in the cytoplasm. The enzyme catalyses tRNA(Ser) + L-serine + ATP = L-seryl-tRNA(Ser) + AMP + diphosphate + H(+). It carries out the reaction tRNA(Sec) + L-serine + ATP = L-seryl-tRNA(Sec) + AMP + diphosphate + H(+). Its pathway is aminoacyl-tRNA biosynthesis; selenocysteinyl-tRNA(Sec) biosynthesis; L-seryl-tRNA(Sec) from L-serine and tRNA(Sec): step 1/1. In terms of biological role, catalyzes the attachment of serine to tRNA(Ser). Is also able to aminoacylate tRNA(Sec) with serine, to form the misacylated tRNA L-seryl-tRNA(Sec), which will be further converted into selenocysteinyl-tRNA(Sec). In Xanthomonas campestris pv. campestris (strain 8004), this protein is Serine--tRNA ligase.